A 239-amino-acid polypeptide reads, in one-letter code: uncharacterized protein (239 aa).

Belongs to the initiator RepB protein family.

Its function is as follows. Mutations in ORF 239 affects the incN plasmid pUC1 E.coli polA-independence but not its autonomous replication ability. This is an uncharacterized protein from Escherichia coli.